We begin with the raw amino-acid sequence, 41 residues long: uncharacterized protein (41 aa).

A helical transmembrane segment spans residues 10 to 32 (LIILAVPFMIKTSLKTNLIFFFL).

It is found in the cell inner membrane. This is an uncharacterized protein from Escherichia coli (strain K12).